The primary structure comprises 473 residues: Spliceosome-associated protein CWC27 homolog (473 aa).

Residue Ser2 is modified to N-acetylserine. The PPIase cyclophilin-type domain occupies 11 to 166; it reads TNGKVLLKTT…NSHKIRSCEV (156 aa). Residues 178–193 show a composition bias toward basic and acidic residues; that stretch reads EIKKPKKEKPEEEVKK. 3 disordered regions span residues 178–197, 203–383, and 401–473; these read EIKKPKKEKPEEEVKKLKPK, SLLS…TSRE, and IAET…KERR. Residues 206–230 adopt a coiled-coil conformation; sequence SFGEEAEEEEEEVNRVSQSMKGKSK. Over residues 231 to 241 the composition is skewed to basic and acidic residues; that stretch reads SSHDLLKDDPH. Residues 252-254 carry the Cell attachment site motif; the sequence is RGD. Acidic residues predominate over residues 256–266; sequence AEDSDDDGEYE. Basic and acidic residues-rich tracts occupy residues 267–348 and 360–372; these read GAEH…KRSE and EYRREKQKYEALR. Residues 311-378 adopt a coiled-coil conformation; the sequence is VSRSEELRKE…EALRKQQAKT (68 aa). Residue Ser347 is modified to Phosphoserine. A compositionally biased stretch (acidic residues) spans 405 to 419; that stretch reads PENDISETEVEDDEG. Composition is skewed to basic and acidic residues over residues 426 to 438 and 458 to 473; these read QFEDKSRKVKDAS and RREESKKLMREKKERR.

The protein belongs to the cyclophilin-type PPIase family. In terms of assembly, part of the activated spliceosome B/catalytic step 1 spliceosome, one of the forms of the spliceosome which has a well-formed active site but still cannot catalyze the branching reaction and is composed at least of 52 proteins, the U2, U5 and U6 snRNAs and the pre-mRNA. Recruited during early steps of activated spliceosome B maturation, it is probably one of the first proteins released from this complex as he matures to the spliceosome C complex. Component of the minor spliceosome, which splices U12-type introns.

The protein localises to the nucleus. In terms of biological role, as part of the spliceosome, plays a role in pre-mRNA splicing. Probable inactive PPIase with no peptidyl-prolyl cis-trans isomerase activity. As a component of the minor spliceosome, involved in the splicing of U12-type introns in pre-mRNAs. This Bos taurus (Bovine) protein is Spliceosome-associated protein CWC27 homolog.